We begin with the raw amino-acid sequence, 172 residues long: RNA silencing suppressor p19 (172 aa).

Composition is skewed to basic and acidic residues over residues 1 to 14 and 150 to 172; these read MERA…REQA and SERE…EESE. Disordered stretches follow at residues 1 to 34 and 145 to 172; these read MERA…KLPD and LQPT…EESE.

Belongs to the tombusvirus protein p19 family. As to quaternary structure, homodimer.

Its function is as follows. Viral suppressor of RNA silencing which binds specifically to silencing RNAs (siRNAs). Acts as a molecular caliper to specifically select siRNAs based on the length of the duplex region of the RNA. The protein is RNA silencing suppressor p19 of Cymbidium ringspot virus (CymRSV).